The following is a 309-amino-acid chain: Histone-lysine N-methyltransferase SETMAR (309 aa).

Residues 74-137 (PGCACIETPC…RCRNRVVQNG (64 aa)) enclose the Pre-SET domain. 9 residues coordinate Zn(2+): Cys76, Cys78, Cys83, Cys88, Cys90, Cys119, Cys123, Cys125, and Cys129. The 125-residue stretch at 140–264 (FLLQVFQTEK…PGEELSYDYS (125 aa)) folds into the SET domain. S-adenosyl-L-methionine contacts are provided by residues 150–152 (KGW), Tyr193, Arg221, and 224–225 (NH). Residues Cys227, Cys288, Cys290, and Cys295 each contribute to the Zn(2+) site. The 17-residue stretch at 284–300 (PRKPCYCGAQSCTTFLP) folds into the Post-SET domain.

Belongs to the class V-like SAM-binding methyltransferase superfamily.

It is found in the nucleus. The protein resides in the chromosome. The catalysed reaction is L-lysyl(36)-[histone H3] + 2 S-adenosyl-L-methionine = N(6),N(6)-dimethyl-L-lysyl(36)-[histone H3] + 2 S-adenosyl-L-homocysteine + 2 H(+). Its function is as follows. Histone methyltransferase that methylates 'Lys-4' and 'Lys-36' of histone H3, 2 specific tags for epigenetic transcriptional activation. Specifically mediates dimethylation of H3 'Lys-36'. This is Histone-lysine N-methyltransferase SETMAR from Mus musculus (Mouse).